Reading from the N-terminus, the 126-residue chain is Protein ApaG (126 aa).

The ApaG domain occupies 2-126 (TELETSIKID…FRLSIPGLLH (125 aa)).

The polypeptide is Protein ApaG (Shewanella woodyi (strain ATCC 51908 / MS32)).